The following is a 190-amino-acid chain: Imidazoleglycerol-phosphate dehydratase (190 aa).

It belongs to the imidazoleglycerol-phosphate dehydratase family.

It localises to the cytoplasm. It carries out the reaction D-erythro-1-(imidazol-4-yl)glycerol 3-phosphate = 3-(imidazol-4-yl)-2-oxopropyl phosphate + H2O. It functions in the pathway amino-acid biosynthesis; L-histidine biosynthesis; L-histidine from 5-phospho-alpha-D-ribose 1-diphosphate: step 6/9. In Aliarcobacter butzleri (strain RM4018) (Arcobacter butzleri), this protein is Imidazoleglycerol-phosphate dehydratase.